The chain runs to 483 residues: L-2-hydroxyglutarate dehydrogenase, mitochondrial (483 aa).

The transit peptide at 1–67 (MKHKPETAAF…VDASKTIVRG (67 aa)) directs the protein to the mitochondrion.

This sequence belongs to the L2HGDH family. FAD is required as a cofactor.

The protein resides in the mitochondrion. It catalyses the reaction (S)-2-hydroxyglutarate + A = 2-oxoglutarate + AH2. Its function is as follows. Catalyzes the oxidation of (S)-2-hydroxyglutarate to 2-oxoglutarate. Is specific for the (S) enantiomer and possesses very poor activity toward (R)-2-hydroxyglutarate. Has no activity toward related 2-hydroxy acids, such as glycolate, L-lactate or D-lactate. The chain is L-2-hydroxyglutarate dehydrogenase, mitochondrial from Arabidopsis thaliana (Mouse-ear cress).